The sequence spans 203 residues: ADP-ribosylation factor-like protein 6-interacting protein 1 (203 aa).

Residues 1-41 lie on the Cytoplasmic side of the membrane; the sequence is MAEGDNRSSNLLAVETASLEEQLQGWGEVMLMADKVLRWER. The helical transmembrane segment at 42–62 threads the bilayer; it reads AWFPPAIMGVVSLLFLIIYYL. Residues 63 to 65 are Lumenal-facing; sequence DPS. The chain crosses the membrane as a helical span at residues 66 to 86; it reads VLSGVSCFVMFLCLADYLVPI. Topologically, residues 87 to 133 are cytoplasmic; the sequence is LAPRIFGSNKWTTEQQQRFHEICSNLVKTRRRAVGWWKRLFSLKEEK. Residues 134-175 traverse the membrane as a helical segment; it reads PKMYFMTMIISLAAVAWVGQQVHNLLLTYLIVTFVLLLPGLN. Over 176 to 203 the chain is Lumenal; the sequence is QHGIILKYIGMAKREINKLLKQKEKKNE.

It belongs to the ARL6ip family. As to quaternary structure, homooligomer. Heterodimer with ARL6IP5. Interacts with ARL6. Interacts with TMEM33. Interacts with ATL1. In terms of tissue distribution, expressed in the cerebral cortex, cerebellum, hippocampus, olfactory bulbs, medulla oblongate and limbic system (at protein level). Ubiquitous. Expressed in all hematopoietic cell lineages, with highest levels in early myeloid progenitor cells.

Its subcellular location is the endomembrane system. It localises to the endoplasmic reticulum membrane. It is found in the endoplasmic reticulum. Functionally, positively regulates SLC1A1/EAAC1-mediated glutamate transport by increasing its affinity for glutamate in a PKC activity-dependent manner. Promotes the catalytic efficiency of SLC1A1/EAAC1 probably by reducing its interaction with ARL6IP5, a negative regulator of SLC1A1/EAAC1-mediated glutamate transport. Plays a role in the formation and stabilization of endoplasmic reticulum tubules. Negatively regulates apoptosis, possibly by modulating the activity of caspase-9 (CASP9). Inhibits cleavage of CASP9-dependent substrates and downstream markers of apoptosis but not CASP9 itself. May be involved in protein transport, membrane trafficking, or cell signaling during hematopoietic maturation. The sequence is that of ADP-ribosylation factor-like protein 6-interacting protein 1 (Arl6ip1) from Mus musculus (Mouse).